The sequence spans 122 residues: Large ribosomal subunit protein uL14 (122 aa).

It belongs to the universal ribosomal protein uL14 family. As to quaternary structure, part of the 50S ribosomal subunit. Forms a cluster with proteins L3 and L19. In the 70S ribosome, L14 and L19 interact and together make contacts with the 16S rRNA in bridges B5 and B8.

Its function is as follows. Binds to 23S rRNA. Forms part of two intersubunit bridges in the 70S ribosome. This Polynucleobacter necessarius subsp. necessarius (strain STIR1) protein is Large ribosomal subunit protein uL14.